The primary structure comprises 209 residues: Uracil phosphoribosyltransferase (209 aa).

5-phospho-alpha-D-ribose 1-diphosphate contacts are provided by residues arginine 79, arginine 104, and 131–139 (DPMLATANS). Uracil is bound by residues isoleucine 194 and 199 to 201 (GDA). Aspartate 200 is a binding site for 5-phospho-alpha-D-ribose 1-diphosphate.

It belongs to the UPRTase family. Requires Mg(2+) as cofactor.

The catalysed reaction is UMP + diphosphate = 5-phospho-alpha-D-ribose 1-diphosphate + uracil. It functions in the pathway pyrimidine metabolism; UMP biosynthesis via salvage pathway; UMP from uracil: step 1/1. With respect to regulation, allosterically activated by GTP. Catalyzes the conversion of uracil and 5-phospho-alpha-D-ribose 1-diphosphate (PRPP) to UMP and diphosphate. This Mesorhizobium japonicum (strain LMG 29417 / CECT 9101 / MAFF 303099) (Mesorhizobium loti (strain MAFF 303099)) protein is Uracil phosphoribosyltransferase.